A 246-amino-acid polypeptide reads, in one-letter code: Glutamate/aspartate import permease protein GltJ (246 aa).

The ABC transmembrane type-1 domain occupies 29–230; the sequence is FQVTIALSIC…LINAFIMLVM (202 aa). Helical transmembrane passes span 33-53, 74-94, 104-124, 179-196, and 212-232; these read IALS…FGIL, NVPL…LLPE, LDPN…FTAA, LVKN…DMAA, and FTAI…VMTL.

The protein belongs to the binding-protein-dependent transport system permease family. HisMQ subfamily. The complex is composed of two ATP-binding proteins (GltL), two transmembrane proteins (GltJ and GltK) and a solute-binding protein (GltI).

It is found in the cell inner membrane. Its function is as follows. Part of the ABC transporter complex GltIJKL involved in glutamate and aspartate uptake. Probably responsible for the translocation of the substrate across the membrane. The protein is Glutamate/aspartate import permease protein GltJ (gltJ) of Escherichia coli O6:H1 (strain CFT073 / ATCC 700928 / UPEC).